The following is a 407-amino-acid chain: MSYPDDYSTDVEKNKMDLKEFKEKTQIAELESKVLRLELKNKDISRENVQIKKENEILKRELDKLRIPPLILGTILDRVNERKAVVKSSTGPNFLVNLSQFVDPEDIVPGARVCLNQQTLAIVEVLPKEKDYRAMAMEIEEKPDISFEDIGGLNNQIRDIKEVVELPLKNPELFEKVGIVPPKGVLLYGPPGTGKTLLAKAVAYETNASFVRVVGSELVKKFIGEGAKLVRDVFKLAKEKSPCIIFIDEIDAVASKRTESLTGGDREVQRTLMQLLAEMDGFDSRGDVKIIAATNRPDILDPAILRPGRFDRIIEISMPDEDGRLDILKIHTEKMNLKGVDLREVAKLAENMVGADLKAVCTEAGMFAIREEREFIKMDDFKEAISKITGKKEKCSYDMPQLTVMYG.

A coiled-coil region spans residues 22 to 67 (KEKTQIAELESKVLRLELKNKDISRENVQIKKENEILKRELDKLRI). Residues 192–197 (GTGKTL) and His331 each bind ATP. A docks into pockets in the proteasome alpha-ring to cause gate opening region spans residues 405–407 (MYG).

The protein belongs to the AAA ATPase family. Homohexamer. The hexameric complex has a two-ring architecture resembling a top hat that caps the 20S proteasome core at one or both ends. Upon ATP-binding, the C-terminus of PAN interacts with the alpha-rings of the proteasome core by binding to the intersubunit pockets.

The protein resides in the cytoplasm. Functionally, ATPase which is responsible for recognizing, binding, unfolding and translocation of substrate proteins into the archaeal 20S proteasome core particle. Is essential for opening the gate of the 20S proteasome via an interaction with its C-terminus, thereby allowing substrate entry and access to the site of proteolysis. Thus, the C-termini of the proteasomal ATPase function like a 'key in a lock' to induce gate opening and therefore regulate proteolysis. Unfolding activity requires energy from ATP hydrolysis, whereas ATP binding alone promotes ATPase-20S proteasome association which triggers gate opening, and supports translocation of unfolded substrates. The protein is Proteasome-activating nucleotidase of Methanococcus maripaludis (strain C6 / ATCC BAA-1332).